A 371-amino-acid polypeptide reads, in one-letter code: Alanine racemase (371 aa).

The Proton acceptor; specific for D-alanine role is filled by Lys-35. Lys-35 is subject to N6-(pyridoxal phosphate)lysine. Position 130 (Arg-130) interacts with substrate. The active-site Proton acceptor; specific for L-alanine is Tyr-256. Met-304 is a binding site for substrate.

It belongs to the alanine racemase family. The cofactor is pyridoxal 5'-phosphate.

The enzyme catalyses L-alanine = D-alanine. The protein operates within amino-acid biosynthesis; D-alanine biosynthesis; D-alanine from L-alanine: step 1/1. Catalyzes the interconversion of L-alanine and D-alanine. May also act on other amino acids. The protein is Alanine racemase (alr) of Verminephrobacter eiseniae (strain EF01-2).